A 292-amino-acid polypeptide reads, in one-letter code: Putative gonadotropin-releasing hormone II receptor (292 aa).

The Extracellular segment spans residues 1–28 (MSAGNGTPWDATWNITVQWLAVDIACRT). An intrachain disulfide couples cysteine 26 to cysteine 101. Residues 29–49 (LMFLKLMATYSAAFLPVVIGL) traverse the membrane as a helical segment. The Cytoplasmic segment spans residues 50–67 (DRQAAVLNPLGSRSGVRK). Residues 68–88 (LLGAAWGLSFLLAFPQLFLFH) form a helical membrane-spanning segment. Residues 89-115 (TVHCAGPVPFTQCVTKGSFKAQWQETT) are Extracellular-facing. A helical membrane pass occupies residues 116–136 (YNLFTFCCLFLLPLTAMAICY). Topologically, residues 137–177 (SRIVLSVSRPQTRKGSHAPAGEFALPRSFDNCPRVRLRALR) are cytoplasmic. A helical transmembrane segment spans residues 178 to 198 (LALLILLTFILCWTPYYLLGM). Topologically, residues 199 to 216 (WYWFSPTMLTEVPPSLSH) are extracellular. Residues 217–237 (ILFLLGLLNAPLDPLLYGAFT) form a helical membrane-spanning segment. The Cytoplasmic portion of the chain corresponds to 238–292 (LGCRRGHQELSIDSSKEGSGRMLQEEIHAFRQLEVQKTVTSRRAGETKGISITSI).

It belongs to the G-protein coupled receptor 1 family. Post-translationally, phosphorylated on the C-terminal cytoplasmic tail. In terms of tissue distribution, expressed in many tissues.

The protein resides in the cell membrane. Functionally, putative receptor for gonadotropin releasing hormone II (GnRH II) which is most probably non-functional. The polypeptide is Putative gonadotropin-releasing hormone II receptor (GNRHR2) (Homo sapiens (Human)).